The following is a 174-amino-acid chain: Regenerating islet-derived protein 3-alpha (174 aa).

The N-terminal stretch at 1–25 (MLPRLSFNNVSWTLLYYLFIFQVRG) is a signal peptide. Positions 26–36 (EDSQKAVPSTR) are excised as a propeptide. Disulfide bonds link C39-C50, C67-C170, and C145-C162. The C-type lectin domain occupies 46–171 (YRSYCYTLVT…CDVELPFVCK (126 aa)). A sufficient to activate EXTL3 region spans residues 102-117 (WIWLHDPTMGQQPNGG). Zn(2+) contacts are provided by H106 and E120.

As to quaternary structure, forms a hexameric membrane-permeabilizing oligomeric pore on membrane phospholipids. The hexamer is formed by three dimers related by helical symmetry. Forms filaments, filamentation traps pore complexes and limits damage to host cells. Interacts with EXTL3. Proteolytic processing by trypsin removes an inhibitory N-terminal propeptide and is essential for peptidoglycan binding and antibacterial activity. As to expression, low expression found in healthy pancreas.

The protein localises to the secreted. In terms of biological role, bactericidal C-type lectin. The lack of the EPN motif may explain its inability to bind peptidoglycan. Functionally, acts as a hormone in response to different stimuli like anti-inflammatory signals, such as IL17A, or gut microbiome. Secreted by different cell types to activate its receptor EXTL3 and induce cell specific signaling pathways. Induced by IL17A in keratinocytes, regulates keratinocyte proliferation and differentiation after skin injury via activation of EXTL3-PI3K-AKT signaling pathway. In parallel, inhibits skin inflammation through the inhibition of inflammatory cytokines such as IL6 and TNF. In pancreas, is able to permealize beta-cells membrane and stimulate their proliferation. This chain is Regenerating islet-derived protein 3-alpha (Reg3a), found in Rattus norvegicus (Rat).